The chain runs to 174 residues: uncharacterized protein (174 aa).

One can recognise an N-acetyltransferase domain in the interval 42-174 (SNTKNINLYE…GVKGMFWYPR (133 aa)).

It belongs to the acetyltransferase family. Ycf52 subfamily.

It localises to the plastid. The protein localises to the chloroplast. This is an uncharacterized protein from Porphyra purpurea (Red seaweed).